Here is a 285-residue protein sequence, read N- to C-terminus: MRRNIILKAPAKVNLTLDVKGKRSDGYHELETVMHQVNLLDIIIISQAAGGIQIKSNSSLIPTNEENLAYQAAEMILGEYAHKEGVEIYIEKNIPVGAGLAGGSTDAAAVILGINQLYDLGLEEEELLEMAASIGSDVAFCLAGGSKLARGRGEILSKLPQRMIPYIILVKPDFQLSTAEVYRELDLTQVEEFPDNAAFLAAWEAYDIINIARNMRNVLETVSIRKYPEIAAIKAELIETGALNALMSGSGPSVMGIFMEEEQALKAREKFQTRYQEVFLLSSYV.

Lys-12 is an active-site residue. 95-105 (PVGAGLAGGST) contacts ATP. The active site involves Asp-137.

This sequence belongs to the GHMP kinase family. IspE subfamily.

It carries out the reaction 4-CDP-2-C-methyl-D-erythritol + ATP = 4-CDP-2-C-methyl-D-erythritol 2-phosphate + ADP + H(+). Its pathway is isoprenoid biosynthesis; isopentenyl diphosphate biosynthesis via DXP pathway; isopentenyl diphosphate from 1-deoxy-D-xylulose 5-phosphate: step 3/6. In terms of biological role, catalyzes the phosphorylation of the position 2 hydroxy group of 4-diphosphocytidyl-2C-methyl-D-erythritol. The protein is 4-diphosphocytidyl-2-C-methyl-D-erythritol kinase of Syntrophomonas wolfei subsp. wolfei (strain DSM 2245B / Goettingen).